The primary structure comprises 106 residues: NADH dehydrogenase [ubiquinone] 1 beta subcomplex subunit 10-B (106 aa).

The interval 1–25 is disordered; that stretch reads MGRKKGLPEFEESAPDGFDPENPYK.

It belongs to the complex I NDUFB10 subunit family. Complex I is composed of at least 49 different subunits.

The protein resides in the mitochondrion inner membrane. In terms of biological role, accessory subunit of the mitochondrial membrane respiratory chain NADH dehydrogenase (Complex I), that is believed not to be involved in catalysis. Complex I functions in the transfer of electrons from NADH to the respiratory chain. The immediate electron acceptor for the enzyme is believed to be ubiquinone. The protein is NADH dehydrogenase [ubiquinone] 1 beta subcomplex subunit 10-B of Arabidopsis thaliana (Mouse-ear cress).